Reading from the N-terminus, the 654-residue chain is 4-hydroxy-3-methylbut-2-en-1-yl diphosphate synthase (flavodoxin) (654 aa).

The [4Fe-4S] cluster site is built by Cys-557, Cys-560, Cys-591, and Glu-598.

This sequence belongs to the IspG family. [4Fe-4S] cluster serves as cofactor.

It carries out the reaction (2E)-4-hydroxy-3-methylbut-2-enyl diphosphate + oxidized [flavodoxin] + H2O + 2 H(+) = 2-C-methyl-D-erythritol 2,4-cyclic diphosphate + reduced [flavodoxin]. It participates in isoprenoid biosynthesis; isopentenyl diphosphate biosynthesis via DXP pathway; isopentenyl diphosphate from 1-deoxy-D-xylulose 5-phosphate: step 5/6. Converts 2C-methyl-D-erythritol 2,4-cyclodiphosphate (ME-2,4cPP) into 1-hydroxy-2-methyl-2-(E)-butenyl 4-diphosphate. In Protochlamydia amoebophila (strain UWE25), this protein is 4-hydroxy-3-methylbut-2-en-1-yl diphosphate synthase (flavodoxin).